The following is a 308-amino-acid chain: Aspartate carbamoyltransferase catalytic subunit (308 aa).

Residues Arg-50 and Thr-51 each contribute to the carbamoyl phosphate site. L-aspartate is bound at residue Lys-78. Residues Arg-100, His-131, and Gln-134 each contribute to the carbamoyl phosphate site. Positions 164 and 216 each coordinate L-aspartate. Ala-259 and Pro-260 together coordinate carbamoyl phosphate.

It belongs to the aspartate/ornithine carbamoyltransferase superfamily. ATCase family. In terms of assembly, heterododecamer (2C3:3R2) of six catalytic PyrB chains organized as two trimers (C3), and six regulatory PyrI chains organized as three dimers (R2).

The catalysed reaction is carbamoyl phosphate + L-aspartate = N-carbamoyl-L-aspartate + phosphate + H(+). Its pathway is pyrimidine metabolism; UMP biosynthesis via de novo pathway; (S)-dihydroorotate from bicarbonate: step 2/3. Its function is as follows. Catalyzes the condensation of carbamoyl phosphate and aspartate to form carbamoyl aspartate and inorganic phosphate, the committed step in the de novo pyrimidine nucleotide biosynthesis pathway. This is Aspartate carbamoyltransferase catalytic subunit from Oenococcus oeni (strain ATCC BAA-331 / PSU-1).